Reading from the N-terminus, the 325-residue chain is MDKSSGELVTLTPNNNNTVQPVALMRLGVFVPTLKSLKNSKKNTLSRTDATEELTRLSLARAEGFDKVEITGPRLDMDNDFKTWVGIIHSFARHNVIGDKVELPFVEFAKLCGIPSSQSSRRLRERISPSLKRIAGTVISFSRTDEKHTREYITHLVQSAYYDTERDIVQLQADPRLFELYQFDRKVLLQLKAINALKRRESAQALYTFIESLPRDPAPISLARLRARLNLKSPVFSQNQTVRRAMEQLREIGYLDYTEIQRGRTKFFCIHYRRPRLKAPNDESKENPLPPSPAEKVSPEMAEKLALLEKLGITLDDLEKLFKSR.

Positions 279–298 are disordered; it reads APNDESKENPLPPSPAEKVS.

Belongs to the initiator RepB protein family.

Its function is as follows. This protein is essential for plasmid replication; it is involved in copy control functions. In vitro, binds to the DNA repeat units, BCDD'D'', EFG and HIJ. The protein is RepFIB replication protein A (repB) of Escherichia coli (strain K12).